A 115-amino-acid chain; its full sequence is Large ribosomal subunit protein uL23 (115 aa).

This sequence belongs to the universal ribosomal protein uL23 family. As to quaternary structure, part of the 50S ribosomal subunit. Contacts protein L29, and trigger factor when it is bound to the ribosome.

In terms of biological role, one of the early assembly proteins it binds 23S rRNA. One of the proteins that surrounds the polypeptide exit tunnel on the outside of the ribosome. Forms the main docking site for trigger factor binding to the ribosome. In Granulibacter bethesdensis (strain ATCC BAA-1260 / CGDNIH1), this protein is Large ribosomal subunit protein uL23.